Reading from the N-terminus, the 263-residue chain is Uridylate kinase (263 aa).

29 to 32 (KVSG) provides a ligand contact to ATP. Position 71 (G71) interacts with UMP. Residues G72 and R76 each contribute to the ATP site. Residues D91 and 152 to 159 (TGNPFFTT) each bind UMP. The ATP site is built by T179, Q180, Y185, and D188.

This sequence belongs to the UMP kinase family. Homohexamer.

The protein localises to the cytoplasm. It carries out the reaction UMP + ATP = UDP + ADP. Its pathway is pyrimidine metabolism; CTP biosynthesis via de novo pathway; UDP from UMP (UMPK route): step 1/1. Its activity is regulated as follows. Inhibited by UTP. Catalyzes the reversible phosphorylation of UMP to UDP. The chain is Uridylate kinase from Maricaulis maris (strain MCS10) (Caulobacter maris).